Reading from the N-terminus, the 860-residue chain is Protein translocase subunit SecA (860 aa).

Residues Gln87, 105-109 (GEGKT), and Asp514 contribute to the ATP site. Residues Cys846, Cys848, Cys857, and Cys858 each contribute to the Zn(2+) site.

It belongs to the SecA family. As to quaternary structure, monomer and homodimer. Part of the essential Sec protein translocation apparatus which comprises SecA, SecYEG and auxiliary proteins SecDF. Other proteins may also be involved. The cofactor is Zn(2+).

It localises to the cell membrane. The protein resides in the cytoplasm. It catalyses the reaction ATP + H2O + cellular proteinSide 1 = ADP + phosphate + cellular proteinSide 2.. Part of the Sec protein translocase complex. Interacts with the SecYEG preprotein conducting channel. Has a central role in coupling the hydrolysis of ATP to the transfer of proteins into and across the cell membrane, serving as an ATP-driven molecular motor driving the stepwise translocation of polypeptide chains across the membrane. This Endomicrobium trichonymphae protein is Protein translocase subunit SecA.